Reading from the N-terminus, the 211-residue chain is Small ribosomal subunit protein uS5 (211 aa).

The region spanning 50 to 113 (LEDEVLDINM…DNAKINITRI (64 aa)) is the S5 DRBM domain.

This sequence belongs to the universal ribosomal protein uS5 family. In terms of assembly, part of the 30S ribosomal subunit. Contacts protein S4.

Functionally, with S4 and S12 plays an important role in translational accuracy. The polypeptide is Small ribosomal subunit protein uS5 (Methanococcoides burtonii (strain DSM 6242 / NBRC 107633 / OCM 468 / ACE-M)).